Reading from the N-terminus, the 395-residue chain is Indoleacetate--lysine synthetase (395 aa).

It belongs to the ATP-dependent AMP-binding enzyme family.

The enzyme catalyses (indol-3-yl)acetate + L-lysine + ATP = N(6)-[(indole-3-yl)acetyl]-L-lysine + ADP + phosphate + H(+). In terms of biological role, conversion of IAA to IAA-lysine. This is Indoleacetate--lysine synthetase (iaaL) from Pseudomonas savastanoi (Pseudomonas syringae pv. savastanoi).